We begin with the raw amino-acid sequence, 126 residues long: Large ribosomal subunit protein bL12 (126 aa).

This sequence belongs to the bacterial ribosomal protein bL12 family. As to quaternary structure, homodimer. Part of the ribosomal stalk of the 50S ribosomal subunit. Forms a multimeric L10(L12)X complex, where L10 forms an elongated spine to which 2 to 4 L12 dimers bind in a sequential fashion. Binds GTP-bound translation factors.

Forms part of the ribosomal stalk which helps the ribosome interact with GTP-bound translation factors. Is thus essential for accurate translation. The sequence is that of Large ribosomal subunit protein bL12 from Nocardia farcinica (strain IFM 10152).